Here is a 67-residue protein sequence, read N- to C-terminus: Histone H2A (67 aa).

Gln60 is subject to N5-methylglutamine.

It belongs to the histone H2A family. The nucleosome is a histone octamer containing two molecules each of H2A, H2B, H3 and H4 assembled in one H3-H4 heterotetramer and two H2A-H2B heterodimers. The octamer wraps approximately 147 bp of DNA.

Its subcellular location is the nucleus. It is found in the chromosome. Its function is as follows. Core component of nucleosome. Nucleosomes wrap and compact DNA into chromatin, limiting DNA accessibility to the cellular machineries which require DNA as a template. Histones thereby play a central role in transcription regulation, DNA repair, DNA replication and chromosomal stability. DNA accessibility is regulated via a complex set of post-translational modifications of histones, also called histone code, and nucleosome remodeling. This chain is Histone H2A, found in Olisthodiscus luteus (Marine phytoflagellate).